Here is a 142-residue protein sequence, read N- to C-terminus: Prefoldin subunit alpha (142 aa).

Belongs to the prefoldin subunit alpha family. Heterohexamer of two alpha and four beta subunits.

The protein resides in the cytoplasm. Functionally, molecular chaperone capable of stabilizing a range of proteins. Seems to fulfill an ATP-independent, HSP70-like function in archaeal de novo protein folding. This chain is Prefoldin subunit alpha, found in Methanosarcina acetivorans (strain ATCC 35395 / DSM 2834 / JCM 12185 / C2A).